Reading from the N-terminus, the 756-residue chain is Sodium/hydrogen exchanger 8 (756 aa).

Residues 1–31 (MTSIIGAALPYKSPEKAIASSSYSAENDSSP) are Extracellular-facing. Asn-27 is a glycosylation site (N-linked (GlcNAc...) asparagine). A helical transmembrane segment spans residues 32-52 (VDAVIFAGTSLVLGTACRYLF). The Cytoplasmic portion of the chain corresponds to 53-56 (NGTR). The helical transmembrane segment at 57-77 (VPYTVVLLVIGIFLGSLEYGT) threads the bilayer. Residues 78 to 89 (KHNLGKLGHGIR) lie on the Extracellular side of the membrane. Residues 90–110 (IWNGINPDLLLAVFLPVLLFE) form a helical membrane-spanning segment. Over 111–125 (SSFSMDVHQIKRCMG) the chain is Cytoplasmic. Residues 126-146 (QMVLLAGPGVLISTFCLGALI) traverse the membrane as a helical segment. Residues 147 to 157 (KLTFPYNWDWK) lie on the Extracellular side of the membrane. The helical transmembrane segment at 158-178 (TSLLLGGLLGATDPVAVVALL) threads the bilayer. At 179-194 (KELGASKKMTTLIDGE) the chain is on the cytoplasmic side. The chain crosses the membrane as a helical span at residues 195–215 (SLMNDGVSVVVFQLFFKMVMG). Over 216–225 (HNSDWGSIIK) the chain is Extracellular. A helical transmembrane segment spans residues 226 to 248 (FLVQNSFGAVGIGLAFGIASVFW). Residues 249–251 (LKF) are Cytoplasmic-facing. A helical transmembrane segment spans residues 252–271 (IFNDTVAQITVTLSASYFAY). Topologically, residues 272 to 276 (YTAQE) are extracellular. A helical transmembrane segment spans residues 277–297 (WAGVSGILTVMILGMFFAAFA). Topologically, residues 298–311 (RTAFKGDSHQSLHH) are cytoplasmic. The chain crosses the membrane as a helical span at residues 312–332 (FWEMAAYIANTLVFMLSGVII). Topologically, residues 333 to 350 (AESVLSGQTISYKGNSWS) are extracellular. Residues 351–371 (FLFLLYLYVQLSRCVVVGVLY) traverse the membrane as a helical segment. The Cytoplasmic segment spans residues 372-385 (PLLCRSGYGLDWKE). Residues 386 to 406 (SIILTWSGLRGAVSLSLALSV) form a helical membrane-spanning segment. At 407–422 (KQSSGNSYLSSDTGTR) the chain is on the extracellular side. Residues 423–443 (FLFLTGGIVFLTLVVNGSTTQ) form a helical membrane-spanning segment. Topologically, residues 444-756 (LLLHLLRMDT…RSLAIGETDA (313 aa)) are cytoplasmic.

This sequence belongs to the monovalent cation:proton antiporter 1 (CPA1) transporter (TC 2.A.36) family.

It localises to the cell membrane. It carries out the reaction Na(+)(in) + H(+)(out) = Na(+)(out) + H(+)(in). It catalyses the reaction K(+)(in) + H(+)(out) = K(+)(out) + H(+)(in). Functionally, may act in low affinity electroneutral exchange of protons for cations such as Na(+) or K(+) across membranes. May also exchange Li(+) and Cs(+) with a lower affinity. This Arabidopsis thaliana (Mouse-ear cress) protein is Sodium/hydrogen exchanger 8 (NHX8).